The following is a 124-amino-acid chain: Large ribosomal subunit protein bL21 (124 aa).

The disordered stretch occupies residues 105 to 124 (NAPSIGPRVRKAKPAAEAAE).

This sequence belongs to the bacterial ribosomal protein bL21 family. In terms of assembly, part of the 50S ribosomal subunit. Contacts protein L20.

This protein binds to 23S rRNA in the presence of protein L20. The sequence is that of Large ribosomal subunit protein bL21 from Rhodopseudomonas palustris (strain BisA53).